The chain runs to 946 residues: Protein translocase subunit SecA (946 aa).

Residues Q90, 108–112 (GEGKT), and D509 contribute to the ATP site.

Belongs to the SecA family. Monomer and homodimer. Part of the essential Sec protein translocation apparatus which comprises SecA, SecYEG and auxiliary proteins SecDF. Other proteins may also be involved.

It is found in the cell inner membrane. The protein resides in the cellular thylakoid membrane. Its subcellular location is the cytoplasm. The enzyme catalyses ATP + H2O + cellular proteinSide 1 = ADP + phosphate + cellular proteinSide 2.. Its function is as follows. Part of the Sec protein translocase complex. Interacts with the SecYEG preprotein conducting channel. Has a central role in coupling the hydrolysis of ATP to the transfer of proteins into and across the cell membrane, serving as an ATP-driven molecular motor driving the stepwise translocation of polypeptide chains across the membrane. Functionally, probably participates in protein translocation into and across both the cytoplasmic and thylakoid membranes in cyanobacterial cells. The sequence is that of Protein translocase subunit SecA from Synechococcus sp. (strain RCC307).